Reading from the N-terminus, the 427-residue chain is Trigger factor (427 aa).

The 86-residue stretch at 163-248 (GDTVVIDFVG…IHEVKTKEVP (86 aa)) folds into the PPIase FKBP-type domain.

This sequence belongs to the FKBP-type PPIase family. Tig subfamily.

The protein localises to the cytoplasm. The enzyme catalyses [protein]-peptidylproline (omega=180) = [protein]-peptidylproline (omega=0). In terms of biological role, involved in protein export. Acts as a chaperone by maintaining the newly synthesized protein in an open conformation. Functions as a peptidyl-prolyl cis-trans isomerase. The chain is Trigger factor from Streptococcus pyogenes serotype M49 (strain NZ131).